The following is a 401-amino-acid chain: NADH-ubiquinone oxidoreductase 49 kDa subunit (401 aa).

It belongs to the complex I 49 kDa subunit family.

The protein localises to the mitochondrion. It catalyses the reaction a ubiquinone + NADH + 5 H(+)(in) = a ubiquinol + NAD(+) + 4 H(+)(out). In terms of biological role, core subunit of the mitochondrial membrane respiratory chain NADH dehydrogenase (Complex I) that is believed to belong to the minimal assembly required for catalysis. Complex I functions in the transfer of electrons from NADH to the respiratory chain. The immediate electron acceptor for the enzyme is believed to be ubiquinone. Component of the iron-sulfur (IP) fragment of the enzyme. This Acanthamoeba castellanii (Amoeba) protein is NADH-ubiquinone oxidoreductase 49 kDa subunit (NAD7).